Reading from the N-terminus, the 412-residue chain is MGDSPKCLRDSLREALRRREDKLCRRKLTILPSSSVDFSSNDFLSLSTSPAYRARFLDILQQAPPLHPFASGGSRLLDGNSAYAEELENFIAAFHNAPSGLLFNSGYDANVGVFSSIPQPGDLIVYDELIHASAHEGMRLSRAGKRIKFPHSSPDGLRAVLQAEITADPRLLQGRRNVFIAFESVYSMDGDVAPIREFVEIVDQLLPYGNGYFLVDEAHATGVFGPRGSGVVQELGLEDRMFVRVHTFGKALASHGAIVLCCADTRDYLINYARSLIYTTALGFPFLASIRAAYELLVEGKTEQLQHKLGQLIAHFRTGLDNLNHKDSSTFEVEHFTNSPIFSLRSSVPRVLASVCQEQGYTVRAIMPPTVPAGKERVRVCLHAGNTVEEVDGLLETIATWLQRMEKQKARL.

106–107 is a binding site for pyridoxal 5'-phosphate; it reads GY. Residue H131 participates in substrate binding. Positions 187, 219, and 247 each coordinate pyridoxal 5'-phosphate. K250 is modified (N6-(pyridoxal phosphate)lysine). Residue T370 coordinates substrate.

The protein belongs to the class-II pyridoxal-phosphate-dependent aminotransferase family. BioF subfamily. Homodimer. The cofactor is pyridoxal 5'-phosphate.

It carries out the reaction 6-carboxyhexanoyl-[ACP] + L-alanine + H(+) = (8S)-8-amino-7-oxononanoate + holo-[ACP] + CO2. Its pathway is cofactor biosynthesis; biotin biosynthesis. Functionally, 8-amino-7-oxononanoate synthase; part of the cluster involved in the biosynthesis of biotin (also known as vitamin B8 or vitamin H), a water-soluble vitamin that functions as a prosthetic group of many carboxylases, such as acetyl-CoA carboxylase and pyruvate carboxylase. Catalyzes the decarboxylative condensation of pimeloyl-[acyl-carrier protein] and L-alanine to produce 8-amino-7-oxononanoate (AON). The protein is 8-amino-7-oxononanoate synthase of Emericella nidulans (strain FGSC A4 / ATCC 38163 / CBS 112.46 / NRRL 194 / M139) (Aspergillus nidulans).